Reading from the N-terminus, the 179-residue chain is Dynein light chain Tctex-type 5 (179 aa).

It belongs to the dynein light chain Tctex-type family. As to quaternary structure, interacts with ZMYND10.

In Homo sapiens (Human), this protein is Dynein light chain Tctex-type 5 (DYNLT5).